A 332-amino-acid chain; its full sequence is MSSLGKLLKLTLLGILLSFSCKFVFGYFNVNQLFDHEFIKVFPNFKGNVEAKIKYPTVVYAIGDIHGDFPNALDVLSAAGVVSPVFPHEWTAGNATLVQTGDVVDRGPDTRKLFRWFNDLHKQAEKHGGRVVRLLGNHEFMNAKGDWRYVHPGDKASYPEPSEENRIIDWGHSGEIGNLLLSEYNVTYKDNTTGSHFMHAGLSPEWAYREETVNELGKELLSHFMSREKIPEYLEDFWAIEGPMWYRGLAQLSEEEACEVALNVTKTLNVNRLVMGHTPQFHGIVSRCEGRILLIDTGLCSAYAGERAVLRISQNDTDSIVEAVYRGKIVKL.

An N-terminal signal peptide occupies residues 1–26; sequence MSSLGKLLKLTLLGILLSFSCKFVFG.

The protein localises to the endoplasmic reticulum. This is an uncharacterized protein from Schizosaccharomyces pombe (strain 972 / ATCC 24843) (Fission yeast).